The chain runs to 367 residues: Quinolinate synthase (367 aa).

The iminosuccinate site is built by His-45 and Ser-62. Cys-109 is a binding site for [4Fe-4S] cluster. Iminosuccinate contacts are provided by residues 140–142 (YVN) and Ser-161. Residue Cys-229 participates in [4Fe-4S] cluster binding. Iminosuccinate contacts are provided by residues 255–257 (HPE) and Thr-272. Cys-319 provides a ligand contact to [4Fe-4S] cluster.

It belongs to the quinolinate synthase family. Type 3 subfamily. The cofactor is [4Fe-4S] cluster.

It is found in the cytoplasm. The enzyme catalyses iminosuccinate + dihydroxyacetone phosphate = quinolinate + phosphate + 2 H2O + H(+). The protein operates within cofactor biosynthesis; NAD(+) biosynthesis; quinolinate from iminoaspartate: step 1/1. In terms of biological role, catalyzes the condensation of iminoaspartate with dihydroxyacetone phosphate to form quinolinate. The polypeptide is Quinolinate synthase (Lysinibacillus sphaericus (strain C3-41)).